A 190-amino-acid polypeptide reads, in one-letter code: Ribonuclease HII (190 aa).

An RNase H type-2 domain is found at 3 to 190 (KLIAGVDEVG…KPVKALLEEK (188 aa)). Asp-9, Glu-10, and Asp-101 together coordinate a divalent metal cation.

It belongs to the RNase HII family. Requires Mn(2+) as cofactor. Mg(2+) is required as a cofactor.

The protein resides in the cytoplasm. It carries out the reaction Endonucleolytic cleavage to 5'-phosphomonoester.. In terms of biological role, endonuclease that specifically degrades the RNA of RNA-DNA hybrids. The protein is Ribonuclease HII of Alteromonas mediterranea (strain DSM 17117 / CIP 110805 / LMG 28347 / Deep ecotype).